We begin with the raw amino-acid sequence, 238 residues long: Large ribosomal subunit protein uL1 (238 aa).

Belongs to the universal ribosomal protein uL1 family. As to quaternary structure, part of the 50S ribosomal subunit.

In terms of biological role, binds directly to 23S rRNA. The L1 stalk is quite mobile in the ribosome, and is involved in E site tRNA release. Functionally, protein L1 is also a translational repressor protein, it controls the translation of the L11 operon by binding to its mRNA. This Picosynechococcus sp. (strain ATCC 27264 / PCC 7002 / PR-6) (Agmenellum quadruplicatum) protein is Large ribosomal subunit protein uL1.